The primary structure comprises 1261 residues: Apoptotic protease-activating factor 1 (1261 aa).

In terms of domain architecture, CARD spans 1–90 (MEERARSRLL…GDLASLLHSD (90 aa)). Positions 106 to 417 (VSPSVQAILS…LELEEVEDVL (312 aa)) constitute an NB-ARC domain. 154–161 (GMAGSGKS) is a binding site for ATP. 13 WD repeats span residues 615-654 (PHQG…KLLE), 657-696 (AHEE…LIRE), 700-743 (EHEE…SQNT), 746-785 (GHME…EWKS), 798-836 (EIKA…LLLK), 840-879 (SRLS…KKAE), 882-921 (GHLS…TSSA), 964-1003 (ELSS…ASVK), 1006-1045 (GHTK…CMVL), 1047-1088 (GHME…MLQD), 1091-1130 (CHEG…MLFL), 1133-1172 (GHKD…LLKI), and 1184-1223 (YHAG…QTFY).

In terms of assembly, monomer. Oligomerizes upon binding of cytochrome c and dATP.

Its subcellular location is the cytoplasm. Functionally, oligomeric Apaf-1 mediates the cytochrome c-dependent autocatalytic activation of pro-caspase-9 (Apaf-3), leading to the activation of caspase-3 and apoptosis. This activation requires ATP. The sequence is that of Apoptotic protease-activating factor 1 (apaf1) from Danio rerio (Zebrafish).